The primary structure comprises 362 residues: D-alanine--D-alanine ligase (362 aa).

One can recognise an ATP-grasp domain in the interval 141 to 346 (KNIFAEAGLN…YPELIEELIR (206 aa)). 174–229 (EEALGYPCFVKPANLGSSVGINKCKDREELEKAFEEAFQFDRKIIVEENIIGREVE) is an ATP binding site. Residues Asp300, Glu313, and Asn315 each contribute to the Mg(2+) site.

The protein belongs to the D-alanine--D-alanine ligase family. Mg(2+) is required as a cofactor. The cofactor is Mn(2+).

It is found in the cytoplasm. It catalyses the reaction 2 D-alanine + ATP = D-alanyl-D-alanine + ADP + phosphate + H(+). It participates in cell wall biogenesis; peptidoglycan biosynthesis. Functionally, cell wall formation. This is D-alanine--D-alanine ligase from Bacillus cytotoxicus (strain DSM 22905 / CIP 110041 / 391-98 / NVH 391-98).